The following is a 316-amino-acid chain: MANLKDIRDRIVSVKNTRKITEAMRLVAAAKVRRAQDQVLRSRPFADRLARVLENIQSRMQFEAADSPLLNKREVKTITLLAVTGDRGLCGGYNANIIKRTEKRYAELKGQGYSPDLVLIGKKAIGYFENRSSLYKIRATFKELEQVPTSEDAASITSEVLAEFLSESTDRVEVIFTKFVSLVSCNPTIQTLLPLDPQGIADSEDEIFRLTTKDSQLIIEKDAAPSNEEPKLPSDIVFEQSPDQLLNALLPLYLQNQLLRALQESAASELASRMTAMNNASDNAKELAKNLTIDYNKARQAAITQEILEVVGGASA.

Belongs to the ATPase gamma chain family. F-type ATPases have 2 components, CF(1) - the catalytic core - and CF(0) - the membrane proton channel. CF(1) has five subunits: alpha(3), beta(3), gamma(1), delta(1), epsilon(1). CF(0) has three main subunits: a, b and c.

It localises to the cellular thylakoid membrane. Its function is as follows. Produces ATP from ADP in the presence of a proton gradient across the membrane. The gamma chain is believed to be important in regulating ATPase activity and the flow of protons through the CF(0) complex. This Prochlorococcus marinus (strain NATL2A) protein is ATP synthase gamma chain.